The primary structure comprises 61 residues: Potassium channel toxin alpha-KTx 18.1 (61 aa).

A signal peptide spans 1–24; sequence MRFTGIILILISMTLIDSFFEMKV. 3 cysteine pairs are disulfide-bonded: cysteine 33–cysteine 52, cysteine 38–cysteine 57, and cysteine 42–cysteine 59.

In terms of tissue distribution, expressed by the venom gland.

It is found in the secreted. Its function is as follows. Reversible blocker of both Kv1.3/KCNA3 potassium channels (high affinity) and Shaker B (mammalian Kv1.1 analog) potassium channels (very low affinity). This chain is Potassium channel toxin alpha-KTx 18.1, found in Tityus obscurus (Amazonian scorpion).